The primary structure comprises 591 residues: Aspartate--tRNA(Asp/Asn) ligase (591 aa).

Glu-175 is an L-aspartate binding site. Positions 199 to 202 (QQYK) are aspartate. L-aspartate is bound by residues Arg-221 and His-450. 221–223 (RDE) serves as a coordination point for ATP. Glu-484 contacts ATP. Residue Arg-491 coordinates L-aspartate. 536 to 539 (GVDR) is a binding site for ATP.

Belongs to the class-II aminoacyl-tRNA synthetase family. Type 1 subfamily. In terms of assembly, homodimer.

It is found in the cytoplasm. It carries out the reaction tRNA(Asx) + L-aspartate + ATP = L-aspartyl-tRNA(Asx) + AMP + diphosphate. Its function is as follows. Aspartyl-tRNA synthetase with relaxed tRNA specificity since it is able to aspartylate not only its cognate tRNA(Asp) but also tRNA(Asn). Reaction proceeds in two steps: L-aspartate is first activated by ATP to form Asp-AMP and then transferred to the acceptor end of tRNA(Asp/Asn). This Rhodopseudomonas palustris (strain ATCC BAA-98 / CGA009) protein is Aspartate--tRNA(Asp/Asn) ligase.